The following is a 481-amino-acid chain: Fibrinogen beta chain (481 aa).

Residues 1–19 (MRHLWLLLLLCVFSVQTQA) form the signal peptide. A disordered region spans residues 22–81 (DDYDEPTDSLDARGHRPVDRRKEEPPSLRPAPPPISGGGYRARPAKATANQKKVERRPPD). The span at 31–47 (LDARGHRPVDRRKEEPP) shows a compositional bias: basic and acidic residues. Residues 35–37 (GHR) are beta-chain polymerization, binding distal domain of another fibrin. The stretch at 149-213 (QAQVKENENV…SDISAQMEYC (65 aa)) forms a coiled coil. Cystine bridges form between C221–C306 and C231–C260. A Fibrinogen C-terminal domain is found at 222–478 (NIPVVSGKEC…RMSMKIRPFF (257 aa)). N384 carries N-linked (GlcNAc...) asparagine glycosylation. C414 and C427 form a disulfide bridge.

Heterohexamer; disulfide linked. Contains 2 sets of 3 non-identical chains (alpha, beta and gamma). The 2 heterotrimers are in head to head conformation with the N-termini in a small central domain. Post-translationally, conversion of fibrinogen to fibrin is triggered by thrombin, which cleaves fibrinopeptides A and B from alpha and beta chains, and thus exposes the N-terminal polymerization sites responsible for the formation of the soft clot.

Its subcellular location is the secreted. Functionally, cleaved by the protease thrombin to yield monomers which, together with fibrinogen alpha (FGA) and fibrinogen gamma (FGG), polymerize to form an insoluble fibrin matrix. Fibrin has a major function in hemostasis as one of the primary components of blood clots. In addition, functions during the early stages of wound repair to stabilize the lesion and guide cell migration during re-epithelialization. Was originally thought to be essential for platelet aggregation, based on in vitro studies using anticoagulated blood. However, subsequent studies have shown that it is not absolutely required for thrombus formation in vivo. Enhances expression of SELP in activated platelets via an ITGB3-dependent pathway. Maternal fibrinogen is essential for successful pregnancy. Fibrin deposition is also associated with infection, where it protects against IFNG-mediated hemorrhage. May also facilitate the immune response via both innate and T-cell mediated pathways. The protein is Fibrinogen beta chain (Fgb) of Mus musculus (Mouse).